Consider the following 461-residue polypeptide: Fumarate hydratase class II (461 aa).

Substrate is bound by residues 99–101 (SGT), 130–133 (HPND), 140–142 (STN), and threonine 188. Residue histidine 189 is the Proton donor/acceptor of the active site. The active site involves serine 319. Substrate-binding positions include serine 320 and 325 to 327 (KVN).

This sequence belongs to the class-II fumarase/aspartase family. Fumarase subfamily. As to quaternary structure, homotetramer.

Its subcellular location is the cytoplasm. It catalyses the reaction (S)-malate = fumarate + H2O. It participates in carbohydrate metabolism; tricarboxylic acid cycle; (S)-malate from fumarate: step 1/1. Involved in the TCA cycle. Catalyzes the stereospecific interconversion of fumarate to L-malate. The polypeptide is Fumarate hydratase class II (Prochlorococcus marinus subsp. pastoris (strain CCMP1986 / NIES-2087 / MED4)).